Here is a 450-residue protein sequence, read N- to C-terminus: Saccharopine dehydrogenase [NADP(+), L-glutamate-forming] (450 aa).

Residues 9-12 (SGFV), 32-34 (CRT), 54-55 (DV), Ile75, 97-98 (TS), 124-126 (VDP), and Ser174 contribute to the NADP(+) site. L-saccharopine is bound by residues 98–99 (SY) and Asp125. L-saccharopine contacts are provided by residues Arg223 and 244 to 246 (TLR).

This sequence belongs to the saccharopine dehydrogenase family. Homodimer.

It localises to the cytoplasm. The catalysed reaction is L-saccharopine + NADP(+) + H2O = (S)-2-amino-6-oxohexanoate + L-glutamate + NADPH + H(+). It participates in amino-acid biosynthesis; L-lysine biosynthesis via AAA pathway; L-lysine from L-alpha-aminoadipate (fungal route): step 2/3. This Schizosaccharomyces pombe (strain 972 / ATCC 24843) (Fission yeast) protein is Saccharopine dehydrogenase [NADP(+), L-glutamate-forming].